A 152-amino-acid chain; its full sequence is Putative aluminum-activated malate transporter 11 (152 aa).

Transmembrane regions (helical) follow at residues 48–68 (VIHAFKVGHSLTLVSLLYFME) and 78–98 (AIWAVMTVVAVLLEFFAVEGL).

This sequence belongs to the aromatic acid exporter (TC 2.A.85) family.

It localises to the membrane. In terms of biological role, malate transporter. In Arabidopsis thaliana (Mouse-ear cress), this protein is Putative aluminum-activated malate transporter 11 (ALMT11).